Consider the following 74-residue polypeptide: Large ribosomal subunit protein eL38B (74 aa).

This sequence belongs to the eukaryotic ribosomal protein eL38 family. As to quaternary structure, component of the large ribosomal subunit (LSU). Mature yeast ribosomes consist of a small (40S) and a large (60S) subunit. The 40S small subunit contains 1 molecule of ribosomal RNA (18S rRNA) and at least 33 different proteins. The large 60S subunit contains 3 rRNA molecules (25S, 5.8S and 5S rRNA) and at least 46 different proteins.

It is found in the cytoplasm. In terms of biological role, component of the ribosome, a large ribonucleoprotein complex responsible for the synthesis of proteins in the cell. The small ribosomal subunit (SSU) binds messenger RNAs (mRNAs) and translates the encoded message by selecting cognate aminoacyl-transfer RNA (tRNA) molecules. The large subunit (LSU) contains the ribosomal catalytic site termed the peptidyl transferase center (PTC), which catalyzes the formation of peptide bonds, thereby polymerizing the amino acids delivered by tRNAs into a polypeptide chain. The nascent polypeptides leave the ribosome through a tunnel in the LSU and interact with protein factors that function in enzymatic processing, targeting, and the membrane insertion of nascent chains at the exit of the ribosomal tunnel. The protein is Large ribosomal subunit protein eL38B (rpl3802) of Schizosaccharomyces pombe (strain 972 / ATCC 24843) (Fission yeast).